The sequence spans 953 residues: Isoleucine--tRNA ligase (953 aa).

Residues 58 to 68 carry the 'HIGH' region motif; sequence PYANGFIHLGH. Residue Glu-573 coordinates L-isoleucyl-5'-AMP. A 'KMSKS' region motif is present at residues 614-618; it reads KMSKS. Position 617 (Lys-617) interacts with ATP. Zn(2+) contacts are provided by Cys-916, Cys-919, Cys-936, and Cys-939.

Belongs to the class-I aminoacyl-tRNA synthetase family. IleS type 1 subfamily. In terms of assembly, monomer. It depends on Zn(2+) as a cofactor.

It localises to the cytoplasm. The enzyme catalyses tRNA(Ile) + L-isoleucine + ATP = L-isoleucyl-tRNA(Ile) + AMP + diphosphate. Functionally, catalyzes the attachment of isoleucine to tRNA(Ile). As IleRS can inadvertently accommodate and process structurally similar amino acids such as valine, to avoid such errors it has two additional distinct tRNA(Ile)-dependent editing activities. One activity is designated as 'pretransfer' editing and involves the hydrolysis of activated Val-AMP. The other activity is designated 'posttransfer' editing and involves deacylation of mischarged Val-tRNA(Ile). The sequence is that of Isoleucine--tRNA ligase from Blochmanniella floridana.